The chain runs to 574 residues: Sorting nexin-33 (574 aa).

In terms of domain architecture, SH3 spans 1-61; the sequence is MALKGRALYD…PASYVEIVRS (61 aa). Residues 68-119 form a disordered region; it reads ADYSSSPAGSPGAQVSLYNSPSVASPARSGGGSGFLSNQGSFEEDDDDDWDD. Phosphoserine is present on residues serine 77 and serine 92. Acidic residues predominate over residues 109–119; it reads FEEDDDDDWDD. The 111-residue stretch at 230-340 folds into the PX domain; the sequence is FACSVEDPTK…HFLSCLDDKQ (111 aa). One can recognise a BAR domain in the interval 371-574; the sequence is LQDVEDRVDT…EKTLRMYDNL (204 aa).

It belongs to the sorting nexin family. Homodimer (via BAR domain). Interacts with ADAM15. Interacts with FASLG. Interacts (via SH3 domain) with DNM1 and DNM2. Interacts with WASL. Interacts with FCHSD1 (via the F-BAR domain). In terms of processing, phosphorylated. Detected in heart and pancreas.

It is found in the cytoplasm. The protein resides in the cytosol. The protein localises to the membrane. It localises to the cytoplasmic vesicle membrane. Its function is as follows. Plays a role in the reorganization of the cytoskeleton, endocytosis and cellular vesicle trafficking via its interactions with membranes, WASL, DNM1 and DNM2. Acts both during interphase and at the end of mitotic cell divisions. Required for efficient progress through mitosis and cytokinesis. Required for normal formation of the cleavage furrow at the end of mitosis. Modulates endocytosis of cell-surface proteins, such as APP and PRNP; this then modulates the secretion of APP and PRNP peptides. Promotes membrane tubulation (in vitro). May promote the formation of macropinosomes. In Homo sapiens (Human), this protein is Sorting nexin-33 (SNX33).